An 889-amino-acid polypeptide reads, in one-letter code: Translation initiation factor IF-2 (889 aa).

2 disordered regions span residues Gly-47–Val-85 and Ala-206–Pro-302. 3 stretches are compositionally biased toward basic and acidic residues: residues Gln-52–Pro-61, Ala-214–Val-241, and Ala-252–Gly-263. Residues Thr-389–Thr-558 enclose the tr-type G domain. A G1 region spans residues Gly-398 to Thr-405. Gly-398–Thr-405 is a binding site for GTP. The segment at Gly-423–His-427 is G2. The interval Asp-444–Gly-447 is G3. Residues Asp-444–His-448 and Asn-498–Asp-501 each bind GTP. The G4 stretch occupies residues Asn-498–Asp-501. The segment at Ser-534–Lys-536 is G5.

Belongs to the TRAFAC class translation factor GTPase superfamily. Classic translation factor GTPase family. IF-2 subfamily.

The protein resides in the cytoplasm. Its function is as follows. One of the essential components for the initiation of protein synthesis. Protects formylmethionyl-tRNA from spontaneous hydrolysis and promotes its binding to the 30S ribosomal subunits. Also involved in the hydrolysis of GTP during the formation of the 70S ribosomal complex. This Colwellia psychrerythraea (strain 34H / ATCC BAA-681) (Vibrio psychroerythus) protein is Translation initiation factor IF-2.